A 1288-amino-acid polypeptide reads, in one-letter code: Photoreceptor cilium actin regulator (1288 aa).

Gly-2 carries N-myristoyl glycine lipidation. A lipid anchor (S-palmitoyl cysteine) is attached at Cys-3. Disordered stretches follow at residues Met-78–Arg-147, Gln-368–Pro-401, Gln-423–Ser-453, Pro-467–Ala-527, Asp-563–Glu-605, Gln-686–Pro-707, Ala-813–Gln-1109, Glu-1132–Pro-1169, and Leu-1190–Ser-1288. 3 stretches are compositionally biased toward polar residues: residues Thr-96 to His-109, Ser-382 to Pro-401, and Cys-434 to Ser-453. Residues Asp-483–Asp-495 are compositionally biased toward acidic residues. 4 stretches are compositionally biased toward polar residues: residues Ser-848–Asn-857, Ser-894–His-904, Pro-927–Lys-946, and Pro-966–Ser-976. Over residues Pro-1018–Thr-1028 the composition is skewed to low complexity. Pro residues-rich tracts occupy residues Pro-1051 to Ser-1063 and Pro-1071 to Ser-1094. The segment covering Gln-1097–Glu-1106 has biased composition (basic and acidic residues). Residues Asp-1209–Glu-1226 show a composition bias toward polar residues. The span at Arg-1268 to Gln-1277 shows a compositional bias: basic and acidic residues. Over residues Pro-1278–Ser-1288 the composition is skewed to polar residues.

Specifically expressed in retina.

It is found in the cell projection. It localises to the cilium. The protein resides in the photoreceptor outer segment. The protein localises to the photoreceptor inner segment. Functionally, plays an essential role for normal photoreceptor cell maintenance and vision. The sequence is that of Photoreceptor cilium actin regulator from Homo sapiens (Human).